Consider the following 287-residue polypeptide: Survival motor neuron protein (287 aa).

The disordered stretch occupies residues 1–27 (MGGGGGLPEPEDSVLFRRGTGQSDDSD). The P1 (binding site for GEMIN2) stretch occupies residues 8–39 (PEPEDSVLFRRGTGQSDDSDIWDDTALIKAYD). T20 bears the Phosphothreonine mark. 2 positions are modified to phosphoserine: S23 and S26. A Glycyl lysine isopeptide (Lys-Gly) (interchain with G-Cter in SUMO2) cross-link involves residue K46. Residues 52–83 (GDISEASDKPKSTPKRKPAKKNKSQKKNATTA) form a disordered region. Residues 63–77 (STPKRKPAKKNKSQK) are compositionally biased toward basic residues. Phosphothreonine is present on T64. Residues 86–146 (QWKVGDKCSA…LSPACEVANN (61 aa)) enclose the Tudor domain. The interval 92 to 205 (KCSAVWSEDG…MSGSGLGPGK (114 aa)) is required for interaction with RPP20/POP7. The segment at 148–216 (EQDTQENENE…GVKFSGPPPP (69 aa)) is disordered. The span at 157–180 (ESQISTDESENSSRSPGNKPNNIK) shows a compositional bias: polar residues. Residue K205 forms a Glycyl lysine isopeptide (Lys-Gly) (interchain with G-Cter in SUMO2) linkage. The P2 (binding site for SM B) stretch occupies residues 234 to 261 (PPIIPPPPPICPDSLDDADALGSMLISW). A required for interaction with SYNCRIP region spans residues 273-287 (GFKQNQKEGRCSHFN).

The protein belongs to the SMN family. As to quaternary structure, homooligomer; may form higher order homooligomers in the dimer to octamer range. Part of the core SMN complex that contains SMN1, GEMIN2/SIP1, DDX20/GEMIN3, GEMIN4, GEMIN5, GEMIN6, GEMIN7, GEMIN8 and STRAP/UNRIP. Part of the SMN-Sm complex that contains SMN1, GEMIN2/SIP1, DDX20/GEMIN3, GEMIN4, GEMIN5, GEMIN6, GEMIN7, GEMIN8, STRAP/UNRIP and the Sm proteins SNRPB, SNRPD1, SNRPD2, SNRPD3, SNRPE, SNRPF and SNRPG. Component of an import snRNP complex composed of KPNB1, RNUT1, SMN1 and ZNF259. Interacts with DDX20, FBL, NOLA1, RNUT1, SYNCRIP and with several spliceosomal snRNP core Sm proteins, including SNRPB, SNRPD1, SNRPD2, SNRPD3, SNRPE and ILF3. Interacts with GEMIN2; the interaction is direct. Interacts with GEMIN3; the interaction is direct. Interacts with GEMIN8; the interaction is direct. Interacts with SNRPB; the interaction is direct. Interacts (via Tudor domain) with SNRPD1 (via C-terminus); the interaction is direct. Interacts with SNRPD2; the interaction is direct. Interacts (via Tudor domain) with SNRPD3 (via C-terminus); the interaction is direct. Interacts with SNRPE; the interaction is direct. Interacts with OSTF1, LSM10, LSM11 and RPP20/POP7. Interacts (via C-terminal region) with ZPR1 (via C-terminal region). Interacts (via Tudor domain) with COIL. Interacts with SETX; recruits SETX to POLR2A. Interacts with POLR2A (via the C-terminal domain (CTD)). Interacts with PRMT5. Interacts with XRN2. Interacts (via C-terminus) with FMR1 (via C-terminus); the interaction is direct and occurs in a RNA-independent manner. Interacts (via Tudor domain) with SF3B2 ('Arg-508'-methylated form). Interacts with WRAP53/TCAB1. Interacts (via Tudor domain) with ELAVL4 in an RNA-independent manner; the interaction is required for localization of ELAVL4 to RNA granules. Interacts with FRG1.

It localises to the nucleus. The protein localises to the gem. It is found in the cajal body. The protein resides in the cytoplasm. Its subcellular location is the cytoplasmic granule. It localises to the perikaryon. The protein localises to the cell projection. It is found in the neuron projection. The protein resides in the axon. Its subcellular location is the myofibril. It localises to the sarcomere. The protein localises to the z line. The SMN complex catalyzes the assembly of small nuclear ribonucleoproteins (snRNPs), the building blocks of the spliceosome, and thereby plays an important role in the splicing of cellular pre-mRNAs. Most spliceosomal snRNPs contain a common set of Sm proteins SNRPB, SNRPD1, SNRPD2, SNRPD3, SNRPE, SNRPF and SNRPG that assemble in a heptameric protein ring on the Sm site of the small nuclear RNA to form the core snRNP (Sm core). In the cytosol, the Sm proteins SNRPD1, SNRPD2, SNRPE, SNRPF and SNRPG are trapped in an inactive 6S pICln-Sm complex by the chaperone CLNS1A that controls the assembly of the core snRNP. To assemble core snRNPs, the SMN complex accepts the trapped 5Sm proteins from CLNS1A forming an intermediate. Binding of snRNA inside 5Sm ultimately triggers eviction of the SMN complex, thereby allowing binding of SNRPD3 and SNRPB to complete assembly of the core snRNP. Within the SMN complex, SMN1 acts as a structural backbone and together with GEMIN2 it gathers the Sm complex subunits. Ensures the correct splicing of U12 intron-containing genes that may be important for normal motor and proprioceptive neurons development. Also required for resolving RNA-DNA hybrids created by RNA polymerase II, that form R-loop in transcription terminal regions, an important step in proper transcription termination. May also play a role in the metabolism of small nucleolar ribonucleoprotein (snoRNPs). The chain is Survival motor neuron protein (SMN1) from Canis lupus familiaris (Dog).